The primary structure comprises 217 residues: MARKGILGTKLGMTQVFDENNKVVPVTVVKAGPNVVTRIRTPERDGYSAVQLAYGEISPRKVNKPVTGQYTAAGVNPRRHLAELRLDDAEAVTEYEVGQELTAEIFADGSYVDVTGTSKGKGFAGTMKRHGFSGQGASHGAQAVHRRPGSIGGCATPARVFKGTRMAGRMGNDRVTVQNLLVHKVDAEQGVLLIKGAVPGRTGGLVMVRSAIKRGEK.

Belongs to the universal ribosomal protein uL3 family. As to quaternary structure, part of the 50S ribosomal subunit. Forms a cluster with proteins L14 and L19.

Its function is as follows. One of the primary rRNA binding proteins, it binds directly near the 3'-end of the 23S rRNA, where it nucleates assembly of the 50S subunit. The protein is Large ribosomal subunit protein uL3 of Mycobacterium marinum (strain ATCC BAA-535 / M).